The sequence spans 106 residues: Heat shock protein HspQ (106 aa).

The segment at 80-106 is disordered; that stretch reads DEHLDNDSMDELSQSIRNQLQAPRLRN. Over residues 90 to 100 the composition is skewed to polar residues; that stretch reads ELSQSIRNQLQ.

Belongs to the HspQ family.

Its subcellular location is the cytoplasm. Involved in the degradation of certain denaturated proteins, including DnaA, during heat shock stress. The sequence is that of Heat shock protein HspQ from Proteus mirabilis (strain HI4320).